We begin with the raw amino-acid sequence, 673 residues long: Putative K(+)-stimulated pyrophosphate-energized sodium pump (673 aa).

Transmembrane regions (helical) follow at residues 3–23 (SFIVYSVLAGVIALIFAFMLS), 62–82 (IVIVTVILAIFVGWQTAACFI), 84–104 (GAIFSIFAGYFGMNVATKANV), 127–147 (VMGMSVVGLGVVGIGIMYYIF), and 154–174 (VTGFGLGASSIALFARVGGGI). Position 177 (lysine 177) interacts with substrate. Residues aspartate 180, aspartate 184, asparagine 207, and aspartate 210 each contribute to the Mg(2+) site. Helical transmembrane passes span 222 to 242 (LFESYVGSIISALTLGTVVYA), 247 to 267 (VMFPLILSSIGIVASIIGILF), 279 to 299 (ALNTGTYIGGIIVIVSAAILS), 302 to 322 (IFGNLKAFFAVASGLVVGMII), 364 to 384 (LWPIVLISIGVLVSFFVMGGG), and 387 to 407 (AMVGLYGISLAAVGMLSTTGL). Aspartate 419 is a Mg(2+) binding site. 4 helical membrane passes run 449–469 (AAIGKGFAIGSAALTALSLFA), 486–506 (VTLVGLFIGAMLPFLFGALTM), 553–573 (EMILPGVLAIVVPVAMGLLLG), and 576–596 (ALGGLLAGALVSGVLVGILMS). Aspartate 603, aspartate 629, and aspartate 633 together coordinate Ca(2+). Lysine 636 contacts substrate. A helical transmembrane segment spans residues 652–672 (IVSLVFAPVVLQYGGILLNLI).

It belongs to the H(+)-translocating pyrophosphatase (TC 3.A.10) family. K(+)-stimulated subfamily. As to quaternary structure, homodimer. Mg(2+) serves as cofactor.

The protein resides in the cell membrane. It carries out the reaction Na(+)(in) + diphosphate + H2O = Na(+)(out) + 2 phosphate + H(+). With respect to regulation, requires K(+) for maximal activity. Sodium pump that utilizes the energy of pyrophosphate hydrolysis as the driving force for Na(+) movement across the membrane. The sequence is that of Putative K(+)-stimulated pyrophosphate-energized sodium pump from Clostridium tetani (strain Massachusetts / E88).